Consider the following 196-residue polypeptide: Somatotropin (196 aa).

An N-terminal signal peptide occupies residues 1–18; the sequence is MEKVVLLLSVLSLGVVCP. Gln-19 carries the pyrrolidone carboxylic acid modification. His-35 serves as a coordination point for Zn(2+). A disulfide bond links Cys-69 and Cys-169. Glu-178 provides a ligand contact to Zn(2+). The cysteines at positions 186 and 194 are disulfide-linked.

It belongs to the somatotropin/prolactin family.

The protein localises to the secreted. Its function is as follows. Growth hormone plays an important role in growth control and is involved in the regulation of several anabolic processes. Implicated as an osmoregulatory substance important for seawater adaptation. The polypeptide is Somatotropin (gh) (Siganus guttatus (Orange-spotted spinefoot)).